The sequence spans 511 residues: Xylose import ATP-binding protein XylG (511 aa).

ABC transporter domains are found at residues 6–244 and 261–506; these read LEMR…VGRE and FEAR…IGKP. Residue 38–45 participates in ATP binding; it reads GENGAGKS.

It belongs to the ABC transporter superfamily. Xylose importer (TC 3.A.1.2.4) family. As to quaternary structure, the complex is composed of two ATP-binding proteins (XylG), two transmembrane proteins (XylH) and a solute-binding protein (XylF).

The protein localises to the cell inner membrane. It catalyses the reaction D-xylose(out) + ATP + H2O = D-xylose(in) + ADP + phosphate + H(+). In terms of biological role, part of the ABC transporter complex XylFGH involved in xylose import. Responsible for energy coupling to the transport system. This is Xylose import ATP-binding protein XylG from Brucella abortus (strain 2308).